The primary structure comprises 107 residues: uncharacterized protein (107 aa).

The span at 88 to 97 (EEKKEKDKGK) shows a compositional bias: basic and acidic residues. The segment at 88–107 (EEKKEKDKGKKGLLSRLKFW) is disordered. Residues 98–107 (KGLLSRLKFW) show a composition bias toward basic residues.

This is an uncharacterized protein from Methanocaldococcus jannaschii (strain ATCC 43067 / DSM 2661 / JAL-1 / JCM 10045 / NBRC 100440) (Methanococcus jannaschii).